A 360-amino-acid chain; its full sequence is Peptide chain release factor 1 (360 aa).

At Q235 the chain carries N5-methylglutamine. Positions 285 to 295 (RQAAEQTDMRR) are enriched in basic and acidic residues. Positions 285–309 (RQAAEQTDMRRNLLGSGDRSDKIRT) are disordered.

The protein belongs to the prokaryotic/mitochondrial release factor family. Methylated by PrmC. Methylation increases the termination efficiency of RF1.

It is found in the cytoplasm. Functionally, peptide chain release factor 1 directs the termination of translation in response to the peptide chain termination codons UAG and UAA. The chain is Peptide chain release factor 1 from Haemophilus influenzae (strain 86-028NP).